Here is a 565-residue protein sequence, read N- to C-terminus: Sulfite reductase [NADPH] hemoprotein beta-component (565 aa).

Cys429, Cys435, Cys474, and Cys478 together coordinate [4Fe-4S] cluster. Cys478 is a binding site for siroheme.

It belongs to the nitrite and sulfite reductase 4Fe-4S domain family. Alpha(8)-beta(8). The alpha component is a flavoprotein, the beta component is a hemoprotein. The cofactor is siroheme. Requires [4Fe-4S] cluster as cofactor.

It carries out the reaction hydrogen sulfide + 3 NADP(+) + 3 H2O = sulfite + 3 NADPH + 4 H(+). It participates in sulfur metabolism; hydrogen sulfide biosynthesis; hydrogen sulfide from sulfite (NADPH route): step 1/1. Component of the sulfite reductase complex that catalyzes the 6-electron reduction of sulfite to sulfide. This is one of several activities required for the biosynthesis of L-cysteine from sulfate. This is Sulfite reductase [NADPH] hemoprotein beta-component from Shewanella pealeana (strain ATCC 700345 / ANG-SQ1).